The sequence spans 201 residues: NAD(P)H-dependent FMN reductase ntnL (201 aa).

FMN-binding positions include R12, 90-93 (EYNG), and Y120.

Homodimer.

It carries out the reaction FMNH2 + NADP(+) = FMN + NADPH + 2 H(+). The catalysed reaction is FMNH2 + NAD(+) = FMN + NADH + 2 H(+). The protein operates within secondary metabolite biosynthesis; terpenoid biosynthesis. NAD(P)H-dependent FMN reductase; part of the gene cluster that mediates the biosynthesis of the meroterpenoids nectripenoids A and B, as well as cochliquninone D and isocochliquninone E. The pathway probably begins with the HR-PKS ntnH that catalyzes two chain-extension steps to form a reduced triketide, which then primes the SAT domain in the NR-PKS ntnG to initiate three more cycles of extension to give a linear hexaketide corresponding to the polyketide part of nectripenoids. The FAD-dependent monooxygenase ntnJ then performs an oxidative decarboxylation at C11 of the ntnH/ntnG product, via an electrophilic aromatic hydroxylation with concomitant ipso-decarboxylation. The membrane-bound polyprenyl transferase ntnF then introduces a farnesyl group before the FAD-dependent monooxygenase ntnK functions as the first epoxidase on terminal C12'-C13' olefin, followed by a second epoxidation on C7'-C8' catalyzed by ntnA. The terpene cyclase/mutase ntnI then initiates the sequential tricyclic ring formation through protonation of the terminal epoxide and catalyzes the regioselective and stereoselective 6/6/6-tricyclic ring formation. The cytochrome P450 monooxygenase ntnM may then hydroxylate C1'. In Nectria sp, this protein is NAD(P)H-dependent FMN reductase ntnL.